The primary structure comprises 180 residues: FMN reductase (NADH) RutF (180 aa).

Belongs to the non-flavoprotein flavin reductase family. RutF subfamily.

It catalyses the reaction FMNH2 + NAD(+) = FMN + NADH + 2 H(+). Its function is as follows. Catalyzes the reduction of FMN to FMNH2 which is used to reduce pyrimidine by RutA via the Rut pathway. The polypeptide is FMN reductase (NADH) RutF (Variovorax paradoxus (strain S110)).